The sequence spans 164 residues: Shikimate kinase (164 aa).

G10–T15 is an ATP binding site. T14 contributes to the Mg(2+) binding site. Residues D28, R52, and G75 each coordinate substrate. Residue R116 coordinates ATP. R134 is a substrate binding site. R151 lines the ATP pocket.

Belongs to the shikimate kinase family. As to quaternary structure, monomer. Mg(2+) is required as a cofactor.

It is found in the cytoplasm. The enzyme catalyses shikimate + ATP = 3-phosphoshikimate + ADP + H(+). It functions in the pathway metabolic intermediate biosynthesis; chorismate biosynthesis; chorismate from D-erythrose 4-phosphate and phosphoenolpyruvate: step 5/7. In terms of biological role, catalyzes the specific phosphorylation of the 3-hydroxyl group of shikimic acid using ATP as a cosubstrate. The sequence is that of Shikimate kinase from Streptococcus equi subsp. zooepidemicus (strain MGCS10565).